The chain runs to 100 residues: Urease subunit gamma (100 aa).

Belongs to the urease gamma subunit family. Heterotrimer of UreA (gamma), UreB (beta) and UreC (alpha) subunits. Three heterotrimers associate to form the active enzyme.

Its subcellular location is the cytoplasm. The catalysed reaction is urea + 2 H2O + H(+) = hydrogencarbonate + 2 NH4(+). Its pathway is nitrogen metabolism; urea degradation; CO(2) and NH(3) from urea (urease route): step 1/1. This is Urease subunit gamma from Bacillus sp. (strain TB-90).